Consider the following 504-residue polypeptide: Sugar transport protein 14 (504 aa).

Residues 1–25 are Cytoplasmic-facing; sequence MAGGALTDEGGLKRAHLYEHRITSY. Transmembrane regions (helical) follow at residues 26–46, 84–104, 121–141, 144–164, 171–191, 205–225, 286–308, 315–337, 352–372, 382–402, 428–448, and 454–474; these read FIFA…DLGV, ILTL…FGAS, VSFF…MLIL, IFLG…LSEM, GTVN…ANLI, LSLG…LVLP, LVIG…ILFY, SLGF…LVVA, FLLL…GVTL, LPKS…LAYG, VVVC…LVSL, and GIFL…YFLL. Over 475 to 504 the chain is Cytoplasmic; that stretch reads PETKQVPIEEVYLLWRQHWLWKKYVEDVDE.

This sequence belongs to the major facilitator superfamily. Sugar transporter (TC 2.A.1.1) family.

Its subcellular location is the membrane. Its function is as follows. Mediates an active uptake of hexoses, probably by sugar/hydrogen symport. This chain is Sugar transport protein 14 (STP14), found in Arabidopsis thaliana (Mouse-ear cress).